Reading from the N-terminus, the 464-residue chain is ATP synthase subunit beta (464 aa).

154–161 contributes to the ATP binding site; the sequence is GGAGVGKT.

The protein belongs to the ATPase alpha/beta chains family. F-type ATPases have 2 components, CF(1) - the catalytic core - and CF(0) - the membrane proton channel. CF(1) has five subunits: alpha(3), beta(3), gamma(1), delta(1), epsilon(1). CF(0) has three main subunits: a(1), b(2) and c(9-12). The alpha and beta chains form an alternating ring which encloses part of the gamma chain. CF(1) is attached to CF(0) by a central stalk formed by the gamma and epsilon chains, while a peripheral stalk is formed by the delta and b chains.

The protein localises to the cell inner membrane. The enzyme catalyses ATP + H2O + 4 H(+)(in) = ADP + phosphate + 5 H(+)(out). In terms of biological role, produces ATP from ADP in the presence of a proton gradient across the membrane. The catalytic sites are hosted primarily by the beta subunits. The protein is ATP synthase subunit beta of Blochmanniella floridana.